The chain runs to 360 residues: Alpha-2-macroglobulin receptor-associated protein (360 aa).

The first 28 residues, 1–28, serve as a signal peptide directing secretion; it reads MAPRRERVSTLPRLQLLVLLLLPLMLVP. 2 positions are modified to phosphoserine: serine 53 and serine 138. The stretch at 184–302 forms a coiled coil; the sequence is EKIQEYNVLL…KHNHYQKQLE (119 aa). Positions 240 to 356 are LDL receptor binding; that stretch reads RLRKVSHQGY…DLSSRVSRAR (117 aa). Asparagine 271 is a glycosylation site (N-linked (GlcNAc...) asparagine). Residues 357-360 carry the Prevents secretion from ER motif; the sequence is HNEL.

The protein belongs to the alpha-2-MRAP family. As to quaternary structure, interacts with the LRP1/alpha-2-macroglobulin receptor heavy and light chains; the interaction is transient and coincides with a reduction of ligand binding by the receptor. Interacts with LRP2/glycoprotein 330. Interacts with LRP1B; binding is followed by internalization and degradation. Interacts with LDLR. Interacts with SORL1. Interacts with LRP1; this interaction is followed by rapid internalization. N-glycosylated. In terms of tissue distribution, highly expressed in PYS-2 parietal endoderm cells and in the kidney. The RNA level increased about 10-fold during differentiation of F9 embryonal carcinoma cells to parietal endoderm cells.

It is found in the rough endoplasmic reticulum lumen. The protein localises to the endoplasmic reticulum-Golgi intermediate compartment lumen. Its subcellular location is the golgi apparatus. It localises to the cis-Golgi network. The protein resides in the golgi apparatus lumen. It is found in the endosome lumen. The protein localises to the cell surface. Functionally, molecular chaperone for LDL receptor-related proteins that may regulate their ligand binding activity along the secretory pathway. This chain is Alpha-2-macroglobulin receptor-associated protein (Lrpap1), found in Mus musculus (Mouse).